Reading from the N-terminus, the 258-residue chain is Phosphate import ATP-binding protein PstB (258 aa).

One can recognise an ABC transporter domain in the interval 5–247; the sequence is IDVSGLTAYY…SQIFSNPKEK (243 aa). 37–44 is an ATP binding site; the sequence is GPSGCGKS.

The protein belongs to the ABC transporter superfamily. Phosphate importer (TC 3.A.1.7) family. In terms of assembly, the complex is composed of two ATP-binding proteins (PstB), two transmembrane proteins (PstC and PstA) and a solute-binding protein (PstS).

Its subcellular location is the cell membrane. It catalyses the reaction phosphate(out) + ATP + H2O = ADP + 2 phosphate(in) + H(+). Its function is as follows. Part of the ABC transporter complex PstSACB involved in phosphate import. Responsible for energy coupling to the transport system. The protein is Phosphate import ATP-binding protein PstB of Frankia casuarinae (strain DSM 45818 / CECT 9043 / HFP020203 / CcI3).